A 257-amino-acid polypeptide reads, in one-letter code: Metallo-beta-lactamase type 2 (257 aa).

The signal sequence occupies residues 1 to 30 (MKKNTLLKVGLCVSLLGTTQFVSTISSVQA). The Zn(2+) site is built by histidine 116, histidine 118, aspartate 120, histidine 179, and cysteine 198. Positions 201 and 210 each coordinate substrate. Histidine 240 lines the Zn(2+) pocket.

It belongs to the metallo-beta-lactamase superfamily. Class-B beta-lactamase family. In terms of assembly, monomer. The cofactor is Zn(2+).

It is found in the periplasm. It carries out the reaction a beta-lactam + H2O = a substituted beta-amino acid. Its function is as follows. Confers resistance to the different beta-lactams antibiotics (penicillin, cephalosporin and carbapenem) via the hydrolysis of the beta-lactam ring. The protein is Metallo-beta-lactamase type 2 of Bacillus sp. (strain 170).